The sequence spans 32 residues: U5-ctenitoxin-Pn1a (32 aa).

3 disulfide bridges follow: Cys3–Cys16, Cys9–Cys21, and Cys15–Cys30.

Expressed by the venom gland.

The protein localises to the secreted. Its function is as follows. Blocks voltage-gated sodium channels (Nav). Causes tail erection, scratching and a reduction in mobility at a dose level of 1.40 mg/mouse. The chain is U5-ctenitoxin-Pn1a from Phoneutria nigriventer (Brazilian armed spider).